Consider the following 607-residue polypeptide: Matrix metalloproteinase-16 (607 aa).

Residues 1 to 31 (MILLAFSSGRRLDFVHRSGVFFFQTLLWILC) form the signal peptide. Positions 32-119 (ATVCGTEQYF…SSKFNIRRKR (88 aa)) are excised as a propeptide. N-linked (GlcNAc...) asparagine glycosylation occurs at asparagine 83. Positions 99–106 (PRCGVPDQ) match the Cysteine switch motif. Position 101 (cysteine 101) interacts with Zn(2+). The Extracellular segment spans residues 120-564 (YALTGQKWQH…LDNTASTVKA (445 aa)). Aspartate 183 contributes to the Ca(2+) binding site. Residues histidine 193 and aspartate 195 each contribute to the Zn(2+) site. Ca(2+) is bound by residues aspartate 200, glycine 201, glycine 203, and phenylalanine 205. Histidine 208 contributes to the Zn(2+) binding site. Ca(2+)-binding residues include glycine 215, glycine 217, and aspartate 219. Histidine 221 contributes to the Zn(2+) binding site. 2 residues coordinate Ca(2+): aspartate 223 and glutamate 226. Histidine 246 is a Zn(2+) binding site. Glutamate 247 is a catalytic residue. The Zn(2+) site is built by histidine 250 and histidine 256. A disordered region spans residues 281–340 (DDLQGIQKIYGPPDKIPPPTRPLPTVPPHRSVPPADPRKNDRPKPPRPPTGRPSYPGAKP). Residues 294–315 (DKIPPPTRPLPTVPPHRSVPPA) are compositionally biased toward pro residues. 4 Hemopexin repeats span residues 340 to 388 (PNIC…WRGL), 389 to 434 (PPSI…GNGI), 436 to 484 (PHGI…KGIP), and 485 to 532 (ESPQ…FMGC). Cysteine 343 and cysteine 532 are disulfide-bonded. A helical membrane pass occupies residues 565-585 (IAIVIPCILALCLLVLVYTVF). The Cytoplasmic segment spans residues 586-607 (QFKRKGTPRHILYCKRSMQEWV).

The protein belongs to the peptidase M10A family. In terms of assembly, interacts with CSPG4 through CSPG4 chondroitin sulfate glycosaminoglycan. Zn(2+) is required as a cofactor. Ca(2+) serves as cofactor. Post-translationally, the precursor is cleaved by a furin endopeptidase. As to expression, strongly expressed in the lung, brain and smooth muscle cells. Weakly detectable in the spleen and liver and indetectable in the heart, skeletal muscle and kidney.

It localises to the cell membrane. The protein resides in the secreted. It is found in the extracellular space. The protein localises to the extracellular matrix. Endopeptidase that degrades various components of the extracellular matrix, such as collagen type III and fibronectin. Activates progelatinase A. Involved in the matrix remodeling of blood vessels. The short isoform efficiently converts progelatinase A to the intermediate form but not to the mature one. It has no effect on type I, II, IV and V collagen. However, upon interaction with CSPG4, it may be involved in degradation and invasion of type I collagen by melanoma cells. The protein is Matrix metalloproteinase-16 (Mmp16) of Rattus norvegicus (Rat).